The chain runs to 151 residues: 6,7-dimethyl-8-ribityllumazine synthase (151 aa).

5-amino-6-(D-ribitylamino)uracil contacts are provided by residues Phe-23, 55-57 (AYE), and 79-81 (AVI). 84–85 (AT) lines the (2S)-2-hydroxy-3-oxobutyl phosphate pocket. Residue His-87 is the Proton donor of the active site. Phe-111 is a 5-amino-6-(D-ribitylamino)uracil binding site. Residue Arg-125 participates in (2S)-2-hydroxy-3-oxobutyl phosphate binding.

It belongs to the DMRL synthase family.

The catalysed reaction is (2S)-2-hydroxy-3-oxobutyl phosphate + 5-amino-6-(D-ribitylamino)uracil = 6,7-dimethyl-8-(1-D-ribityl)lumazine + phosphate + 2 H2O + H(+). It functions in the pathway cofactor biosynthesis; riboflavin biosynthesis; riboflavin from 2-hydroxy-3-oxobutyl phosphate and 5-amino-6-(D-ribitylamino)uracil: step 1/2. Functionally, catalyzes the formation of 6,7-dimethyl-8-ribityllumazine by condensation of 5-amino-6-(D-ribitylamino)uracil with 3,4-dihydroxy-2-butanone 4-phosphate. This is the penultimate step in the biosynthesis of riboflavin. This chain is 6,7-dimethyl-8-ribityllumazine synthase, found in Leptospira interrogans serogroup Icterohaemorrhagiae serovar Lai (strain 56601).